A 504-amino-acid chain; its full sequence is Melianol synthase CYP71BQ5 (504 aa).

A helical transmembrane segment spans residues 2–22; it reads EFRLPSLPVFLSFLLFFLMLV. Cysteine 442 contributes to the heme binding site.

This sequence belongs to the cytochrome P450 family. Heme is required as a cofactor. As to expression, mainly expressed in fruits and leaves.

It localises to the membrane. The enzyme catalyses dihydroniloticin + 2 reduced [NADPH--hemoprotein reductase] + 2 O2 = melianol + 2 oxidized [NADPH--hemoprotein reductase] + 3 H2O + 2 H(+). The protein operates within secondary metabolite biosynthesis; terpenoid biosynthesis. In terms of biological role, monooxygenase involved in the biosynthesis of limonoids triterpene natural products such as azadirachtin, an antifeedant widely used as bioinsecticide, and possessing many medicinal applications including anti-tumoral, anti-malarial, anti-rheumatic, antibacterial, anti-inflammatory, anti-pyretic and diuretic effects. Catalyzes the conversion of dihydroniloticin to the protolimonoid melianol. This Azadirachta indica (Neem tree) protein is Melianol synthase CYP71BQ5.